A 186-amino-acid polypeptide reads, in one-letter code: Dual-action ribosomal maturation protein DarP (186 aa).

Belongs to the DarP family.

It localises to the cytoplasm. Functionally, member of a network of 50S ribosomal subunit biogenesis factors which assembles along the 30S-50S interface, preventing incorrect 23S rRNA structures from forming. Promotes peptidyl transferase center (PTC) maturation. In Proteus mirabilis (strain HI4320), this protein is Dual-action ribosomal maturation protein DarP.